A 484-amino-acid chain; its full sequence is Cobyric acid synthase (484 aa).

The GATase cobBQ-type domain occupies 246-437 (ALRVVVPALP…VHGLFDTPAA (192 aa)). Cys327 acts as the Nucleophile in catalysis. The active site involves His429.

Belongs to the CobB/CobQ family. CobQ subfamily.

Its pathway is cofactor biosynthesis; adenosylcobalamin biosynthesis. Functionally, catalyzes amidations at positions B, D, E, and G on adenosylcobyrinic A,C-diamide. NH(2) groups are provided by glutamine, and one molecule of ATP is hydrogenolyzed for each amidation. This Paraburkholderia phymatum (strain DSM 17167 / CIP 108236 / LMG 21445 / STM815) (Burkholderia phymatum) protein is Cobyric acid synthase.